We begin with the raw amino-acid sequence, 137 residues long: Small ribosomal subunit protein uS12 (137 aa).

Disordered stretches follow at residues 1–21 (MPTINQLVRKPRKSKIEKSDS) and 33–57 (KVQTKMAAPQKRGVATRVGTMTPKK).

The protein belongs to the universal ribosomal protein uS12 family. Part of the 30S ribosomal subunit. Contacts proteins S8 and S17. May interact with IF1 in the 30S initiation complex.

Its function is as follows. With S4 and S5 plays an important role in translational accuracy. Interacts with and stabilizes bases of the 16S rRNA that are involved in tRNA selection in the A site and with the mRNA backbone. Located at the interface of the 30S and 50S subunits, it traverses the body of the 30S subunit contacting proteins on the other side and probably holding the rRNA structure together. The combined cluster of proteins S8, S12 and S17 appears to hold together the shoulder and platform of the 30S subunit. The polypeptide is Small ribosomal subunit protein uS12 (Streptococcus pyogenes serotype M1).